The chain runs to 601 residues: Methionine--tRNA ligase (601 aa).

The short motif at 21–31 (PYANGPRHIGH) is the 'HIGH' region element. Residues Cys153, Cys156, Cys166, and Cys169 each contribute to the Zn(2+) site. Residue Asn361 coordinates ATP.

This sequence belongs to the class-I aminoacyl-tRNA synthetase family. MetG type 1 subfamily. Monomer. Zn(2+) serves as cofactor.

Its subcellular location is the cytoplasm. The catalysed reaction is tRNA(Met) + L-methionine + ATP = L-methionyl-tRNA(Met) + AMP + diphosphate. Its function is as follows. Is required not only for elongation of protein synthesis but also for the initiation of all mRNA translation through initiator tRNA(fMet) aminoacylation. This Cutibacterium acnes (strain DSM 16379 / KPA171202) (Propionibacterium acnes) protein is Methionine--tRNA ligase.